We begin with the raw amino-acid sequence, 745 residues long: Phosphoribosylformylglycinamidine synthase subunit PurL (745 aa).

H54 is a catalytic residue. Residues Y57 and K96 each contribute to the ATP site. Position 98 (E98) interacts with Mg(2+). Residues 99–102 (SHNH) and R121 each bind substrate. The Proton acceptor role is filled by H100. A Mg(2+)-binding site is contributed by D122. Q250 is a binding site for substrate. Mg(2+) is bound at residue D278. A substrate-binding site is contributed by 322-324 (ESQ). Residues D503 and G540 each coordinate ATP. N541 lines the Mg(2+) pocket. Position 543 (S543) interacts with substrate.

The protein belongs to the FGAMS family. As to quaternary structure, monomer. Part of the FGAM synthase complex composed of 1 PurL, 1 PurQ and 2 PurS subunits.

It is found in the cytoplasm. It carries out the reaction N(2)-formyl-N(1)-(5-phospho-beta-D-ribosyl)glycinamide + L-glutamine + ATP + H2O = 2-formamido-N(1)-(5-O-phospho-beta-D-ribosyl)acetamidine + L-glutamate + ADP + phosphate + H(+). The protein operates within purine metabolism; IMP biosynthesis via de novo pathway; 5-amino-1-(5-phospho-D-ribosyl)imidazole from N(2)-formyl-N(1)-(5-phospho-D-ribosyl)glycinamide: step 1/2. Functionally, part of the phosphoribosylformylglycinamidine synthase complex involved in the purines biosynthetic pathway. Catalyzes the ATP-dependent conversion of formylglycinamide ribonucleotide (FGAR) and glutamine to yield formylglycinamidine ribonucleotide (FGAM) and glutamate. The FGAM synthase complex is composed of three subunits. PurQ produces an ammonia molecule by converting glutamine to glutamate. PurL transfers the ammonia molecule to FGAR to form FGAM in an ATP-dependent manner. PurS interacts with PurQ and PurL and is thought to assist in the transfer of the ammonia molecule from PurQ to PurL. The chain is Phosphoribosylformylglycinamidine synthase subunit PurL from Helicobacter hepaticus (strain ATCC 51449 / 3B1).